Here is an 88-residue protein sequence, read N- to C-terminus: uncharacterized protein (88 aa).

The next 3 helical transmembrane spans lie at 3–23 (VFILFYLWIVPIVIGILCSVA), 33–53 (VAPGIAMIVLSIISLITAFTA), and 61–81 (FIGGMFLFGTFLVGSAFPFFF).

The protein resides in the cell membrane. This is an uncharacterized protein from Bacillus subtilis (strain 168).